A 595-amino-acid chain; its full sequence is P2X purinoceptor 7 (595 aa).

Residues 1 to 22 (MPACCSWNDVFQYETNKVTRIQ) are Cytoplasmic-facing. A lipid anchor (S-palmitoyl cysteine) is attached at C4. Residues 23-46 (SVNYGTIKWILHMTVFSYVSFALM) form a helical membrane-spanning segment. Over 47–328 (SDKLYQRKEP…ILVFGTGGKF (282 aa)) the chain is Extracellular. Residue N74 is glycosylated (N-linked (GlcNAc...) asparagine). 3 disulfide bridges follow: C119–C168, C129–C152, and C135–C162. R125 is subject to ADP-ribosylarginine. N187 is a glycosylation site (N-linked (GlcNAc...) asparagine). T189 contributes to the ATP binding site. Residues N202 and N213 are each glycosylated (N-linked (GlcNAc...) asparagine). C216 and C226 are oxidised to a cystine. N-linked (GlcNAc...) asparagine glycosylation occurs at N241. C260 and C269 are oxidised to a cystine. A glycan (N-linked (GlcNAc...) asparagine) is linked at N284. The ATP site is built by R294 and K311. Residues 329-353 (DIIQLVVYIGSTLSYFGLATVCIDL) traverse the membrane as a helical segment. S342 is a Na(+) binding site. Residues 354–595 (IINTYASTCC…GQYSGFKYPY (242 aa)) are Cytoplasmic-facing. A C-cys anchor region spans residues 360–377 (STCCRSRVYPSCKCCEPC). 4 S-palmitoyl cysteine lipidation sites follow: C362, C363, C374, and C377. The tract at residues 395–595 (KPTLKYVSFV…GQYSGFKYPY (201 aa)) is cytoplasmic ballast. The Zn(2+) site is built by C479, C499, and C506. GTP-binding residues include R546, H547, Y550, and A567. C572 serves as a coordination point for Zn(2+). Positions 583, 589, and 590 each coordinate GTP.

This sequence belongs to the P2X receptor family. As to quaternary structure, homotrimer. Interacts with LAMA3, ITGB2, ACTB, ACTN4, SVIL, MPP3, HSPA1, HSPCB, HSPA8, PIK230 and PTPRB. Interacts (via C-terminus) with EMP2. In terms of processing, phosphorylation results in its inactivation. Post-translationally, ADP-ribosylation at Arg-125 is necessary and sufficient to activate P2RX7 and gate the channel. Palmitoylation of several cysteines in the C-terminal cytoplasmic tail is required for efficient localization to cell surface. Palmitoylation prevents channel desensitization by physically anchoring the palmitoylated groups to the membrane.

Its subcellular location is the cell membrane. It carries out the reaction Ca(2+)(in) = Ca(2+)(out). It catalyses the reaction K(+)(in) = K(+)(out). The catalysed reaction is Na(+)(in) = Na(+)(out). Its activity is regulated as follows. Activated by high extracellular ATP levels (0.1-2.5 mM). The synthetic analog 2'(3')-O-(4-benzoylbenzoyl)ATP (BzATP) acts as a potent agonist. Does not undergo desensitization, instead, undergoes a facilitation process where currents progressively increase with repetitive or prolonged agonist application. Palmitoylation prevents channel desensitization. The permeability of the P2RX7 channel is modulated by the amount of cholesterol in the plasma membrane. In terms of biological role, ATP-gated nonselective transmembrane cation channel that requires high millimolar concentrations of ATP for activation. Upon ATP binding, it rapidly opens to allow the influx of small cations Na(+) and Ca(2+), and the K(+) efflux. Also has the ability to form a large pore in the cell membrane, allowing the passage of large cationic molecules. In microglia, may mediate the transmembrane transport of exogenous NADPH. In immune cells, P2RX7 acts as a molecular sensor in pathological inflammatory states by detecting and responding to high local concentrations of extracellar ATP. In microglial cells, P2RX7 activation leads to the release of pro-inflammatory cytokines, such as IL-1beta and IL-18, through the activation of the NLRP3 inflammasome and caspase-1. Cooperates with KCNK6 to activate NLRP3 inflammasome. Activates death pathways leading to apoptosis and autophagy. Activates death pathways leading to pyroptosis. Functionally, has a higher affinity for ATP, slower deactivation and an increased propensity to form large cation-permeable pores. The protein is P2X purinoceptor 7 (P2rx7) of Rattus norvegicus (Rat).